The following is a 142-amino-acid chain: DNA-directed RNA polymerase II subunit RPB4 (142 aa).

The protein belongs to the eukaryotic RPB4 RNA polymerase subunit family. Component of the RNA polymerase II (Pol II) core complex consisting of 12 subunits: a ten-subunit catalytic core composed of POLR2A/RPB1, POLR2B/RPB2, POLR2C/RPB3, POLR2I/RPB9, POLR2J/RPB11, POLR2E/RPABC1, POLR2F/RPABC2, POLR2H/RPABC3, POLR2K/RPABC4 and POLR2L/RPABC5 and a mobile stalk composed of two subunits POLR2D/RPB4 and POLR2G/RPB7, protruding from the core and functioning primarily in transcription initiation. Part of Pol II(G) complex, in which Pol II core associates with an additional subunit POLR2M; unlike conventional Pol II, Pol II(G) functions as a transcriptional repressor. Part of Pol II pre-initiation complex (PIC), in which Pol II core assembles with Mediator, general transcription factors and other specific initiation factors including GTF2E1, GTF2E2, GTF2F1, GTF2F2, TCEA1, ERCC2, ERCC3, GTF2H2, GTF2H3, GTF2H4, GTF2H5, GTF2A1, GTF2A2, GTF2B and TBP; this large multi-subunit PIC complex mediates DNA unwinding and targets Pol II core to the transcription start site where the first phosphodiester bond forms.

The protein localises to the nucleus. Core component of RNA polymerase II (Pol II), a DNA-dependent RNA polymerase which synthesizes mRNA precursors and many functional non-coding RNAs using the four ribonucleoside triphosphates as substrates. Pol II is the central component of the basal RNA polymerase II transcription machinery. It is composed of mobile elements that move relative to each other. POLR2D/RPB4 is part of a subcomplex with POLR2G/RPB7 that binds to a pocket formed by POLR2A/RPB1, POLR2B/RPB2 and POLR2F/RPABC2 at the base of the clamp element. The POLR2D/RPB4-POLR2G/RPB7 subcomplex seems to lock the clamp via POLR2G/RPB7 in the closed conformation thus preventing double-stranded DNA to enter the active site cleft. The POLR2D/RPB4-POLR2G/RPB7 subcomplex binds single-stranded DNA and RNA. This is DNA-directed RNA polymerase II subunit RPB4 (POLR2D) from Bos taurus (Bovine).